The chain runs to 376 residues: Ribosomal RNA large subunit methyltransferase G (376 aa).

Belongs to the methyltransferase superfamily. RlmG family.

Its subcellular location is the cytoplasm. The enzyme catalyses guanosine(1835) in 23S rRNA + S-adenosyl-L-methionine = N(2)-methylguanosine(1835) in 23S rRNA + S-adenosyl-L-homocysteine + H(+). Specifically methylates the guanine in position 1835 (m2G1835) of 23S rRNA. This chain is Ribosomal RNA large subunit methyltransferase G, found in Klebsiella pneumoniae subsp. pneumoniae (strain ATCC 700721 / MGH 78578).